The primary structure comprises 523 residues: Monocarboxylate transporter 7 (523 aa).

Residues 1 to 21 (MTQNKLKLCSKANVYTEVPDG) lie on the Cytoplasmic side of the membrane. A helical membrane pass occupies residues 22–42 (GWGWAVAVSFFFVEVFTYGII). Residues 43–62 (KTFGVFFNDLMDSFNESNSR) are Extracellular-facing. The chain crosses the membrane as a helical span at residues 63 to 83 (ISWIISICVFVLTFSAPLATV). Topologically, residues 84-91 (LSNRFGHR) are cytoplasmic. The helical transmembrane segment at 92 to 112 (LVVMLGGLLVSTGMVAASFSQ) threads the bilayer. Residues 113-118 (EVSHMY) are Extracellular-facing. Residues 119 to 139 (VAIGIISGLGYCFSFLPTVTI) form a helical membrane-spanning segment. Over 140-149 (LSQYFGKRRS) the chain is Cytoplasmic. The chain crosses the membrane as a helical span at residues 150–170 (IVTAVASTGECFAVFAFAPAI). Residues 171–184 (MALKERIGWRYSLL) lie on the Extracellular side of the membrane. Residues 185-205 (FVGLLQLNIVIFGALLRPIFI) traverse the membrane as a helical segment. The Cytoplasmic portion of the chain corresponds to 206–299 (RGPASPKIVI…KEKSFICYAL (94 aa)). Phosphoserine occurs at positions 234, 237, 240, and 247. Residues 300 to 320 (FGLFATLGFFAPSLYIIPLGI) traverse the membrane as a helical segment. The Extracellular segment spans residues 321–330 (SLGIDQDRAA). The helical transmembrane segment at 331-351 (FLLSTMAIAEVFGRIGAGFVL) threads the bilayer. Topologically, residues 352–358 (NREPIRK) are cytoplasmic. A helical membrane pass occupies residues 359–379 (IYIELICVILLTVSLFAFTFA). The Extracellular segment spans residues 380-381 (TE). The helical transmembrane segment at 382 to 402 (FWGLMSCSIFFGFMVGTIGGT) threads the bilayer. Residues 403–423 (HIPLLAEDDVVGIEKMSSAAG) lie on the Cytoplasmic side of the membrane. Residues 424–444 (VYIFIQSIAGLAGPPLAGLLV) traverse the membrane as a helical segment. The Extracellular portion of the chain corresponds to 445–452 (DQSKIYSR). The chain crosses the membrane as a helical span at residues 453–473 (AFYSCAAGMALAAVCLALVRP). Topologically, residues 474–523 (CKMGLCQHHHSGETKVVSHRGKTLQDIPEDFLEMDLAKNEHRVHVQMEPV) are cytoplasmic.

It belongs to the major facilitator superfamily. Monocarboxylate porter (TC 2.A.1.13) family. In terms of assembly, forms functional complexes with BSG/CD147 or EMB/GP70 ancillary proteins.

It localises to the basolateral cell membrane. It catalyses the reaction taurine(out) = taurine(in). Functionally, monocarboxylate transporter selective for taurine. May associate with BSG/CD147 or EMB/GP70 ancillary proteins to mediate facilitative efflux or influx of taurine across the plasma membrane. The transport is pH- and sodium-independent. Rather low-affinity, is likely effective for taurine transport in tissues where taurine is present at high concentrations. This Homo sapiens (Human) protein is Monocarboxylate transporter 7.